We begin with the raw amino-acid sequence, 292 residues long: MGLGMWLRTGVLMAFLTGLLMAIGYVLGNETGMMFAFMFALVMNFFSYWYSDKIVLTWYRARILEEDEAPELYEIVRGLAQEAGIPTPKIAIVPTETPNAFATGRNPKNAVVAVTQGLLRILNRDELEGVIAHELSHIKNRDVLIQTLAAVMAGAIMMVARWAGWMLWLGGFGGRDRDRDASGALGAILLIVLAPIAAMLIQMAISRAREYLADETGAKISGKPWALARALEKIEHAVSMRPIKNGNPATAHMFIINPFRGVSFAELFSTHPPTQKRIERLRKIAENMGIAF.

2 consecutive transmembrane segments (helical) span residues 9-29 (TGVLMAFLTGLLMAIGYVLGN) and 31-51 (TGMMFAFMFALVMNFFSYWYS). H133 provides a ligand contact to Zn(2+). Residue E134 is part of the active site. H137 serves as a coordination point for Zn(2+). A run of 2 helical transmembrane segments spans residues 148-168 (LAAVMAGAIMMVARWAGWMLW) and 185-205 (LGAILLIVLAPIAAMLIQMAI). E210 serves as a coordination point for Zn(2+).

The protein belongs to the peptidase M48B family. Requires Zn(2+) as cofactor.

It localises to the cell membrane. This Thermococcus sibiricus (strain DSM 12597 / MM 739) protein is Protease HtpX homolog.